A 139-amino-acid chain; its full sequence is D-ribose pyranase (139 aa).

Residue His-20 is the Proton donor of the active site. Substrate is bound by residues Asp-28, His-106, and 128–130 (YAN).

Belongs to the RbsD / FucU family. RbsD subfamily. In terms of assembly, homodecamer.

Its subcellular location is the cytoplasm. It catalyses the reaction beta-D-ribopyranose = beta-D-ribofuranose. It participates in carbohydrate metabolism; D-ribose degradation; D-ribose 5-phosphate from beta-D-ribopyranose: step 1/2. Catalyzes the interconversion of beta-pyran and beta-furan forms of D-ribose. This chain is D-ribose pyranase, found in Escherichia coli O139:H28 (strain E24377A / ETEC).